A 515-amino-acid polypeptide reads, in one-letter code: DNA-directed RNA polymerase subunit Rpo2N (515 aa).

It belongs to the RNA polymerase beta chain family. As to quaternary structure, part of the RNA polymerase complex.

The protein resides in the cytoplasm. The enzyme catalyses RNA(n) + a ribonucleoside 5'-triphosphate = RNA(n+1) + diphosphate. Its function is as follows. DNA-dependent RNA polymerase (RNAP) catalyzes the transcription of DNA into RNA using the four ribonucleoside triphosphates as substrates. The Rpo2 subunit (Rpo2N and Rpo2C in this organism) is implicated in DNA promoter recognition and in nucleotide binding. This is DNA-directed RNA polymerase subunit Rpo2N from Methanothermobacter thermautotrophicus (strain Winter) (Methanobacterium thermoautotrophicum).